We begin with the raw amino-acid sequence, 337 residues long: 3-isopropylmalate dehydrogenase (337 aa).

Substrate-binding residues include Arg-86, Arg-96, Arg-117, and Asp-201. Mg(2+) contacts are provided by Asp-201, Asp-225, and Asp-229. 258-270 (GAAFDIAGKNIGN) is a binding site for NAD(+).

This sequence belongs to the isocitrate and isopropylmalate dehydrogenases family. Homotetramer. Mg(2+) serves as cofactor. It depends on Mn(2+) as a cofactor.

The protein resides in the cytoplasm. It catalyses the reaction (2R,3S)-3-isopropylmalate + NAD(+) = 4-methyl-2-oxopentanoate + CO2 + NADH. Its pathway is amino-acid biosynthesis; L-leucine biosynthesis; L-leucine from 3-methyl-2-oxobutanoate: step 3/4. Catalyzes the oxidation of 3-carboxy-2-hydroxy-4-methylpentanoate (3-isopropylmalate) to 3-carboxy-4-methyl-2-oxopentanoate. The product decarboxylates to 4-methyl-2 oxopentanoate. This is 3-isopropylmalate dehydrogenase (leuB) from Sulfurisphaera tokodaii (strain DSM 16993 / JCM 10545 / NBRC 100140 / 7) (Sulfolobus tokodaii).